The following is a 324-amino-acid chain: Glycerol-3-phosphate dehydrogenase [NAD(P)+] (324 aa).

Residues Trp-15, Arg-35, and Lys-101 each contribute to the NADPH site. 2 residues coordinate sn-glycerol 3-phosphate: Lys-101 and Gly-129. Ala-133 is a binding site for NADPH. Sn-glycerol 3-phosphate is bound by residues Lys-184, Asp-237, Ser-247, Arg-248, and Asn-249. The active-site Proton acceptor is the Lys-184. Arg-248 contacts NADPH. 2 residues coordinate NADPH: Val-272 and Glu-274.

Belongs to the NAD-dependent glycerol-3-phosphate dehydrogenase family.

The protein localises to the cytoplasm. The catalysed reaction is sn-glycerol 3-phosphate + NAD(+) = dihydroxyacetone phosphate + NADH + H(+). The enzyme catalyses sn-glycerol 3-phosphate + NADP(+) = dihydroxyacetone phosphate + NADPH + H(+). It functions in the pathway membrane lipid metabolism; glycerophospholipid metabolism. Catalyzes the reduction of the glycolytic intermediate dihydroxyacetone phosphate (DHAP) to sn-glycerol 3-phosphate (G3P), the key precursor for phospholipid synthesis. The protein is Glycerol-3-phosphate dehydrogenase [NAD(P)+] of Gluconobacter oxydans (strain 621H) (Gluconobacter suboxydans).